Here is a 60-residue protein sequence, read N- to C-terminus: UPF0434 protein Bpro_2950 (60 aa).

Belongs to the UPF0434 family.

In Polaromonas sp. (strain JS666 / ATCC BAA-500), this protein is UPF0434 protein Bpro_2950.